Reading from the N-terminus, the 526-residue chain is Probable feruloyl esterase B (526 aa).

A signal peptide spans 1 to 18; sequence MARLSLLTLLALGSAALA. 2 cysteine pairs are disulfide-bonded: Cys-27/Cys-74 and Cys-62/Cys-113. Asn-137 carries N-linked (GlcNAc...) asparagine glycosylation. 4 cysteine pairs are disulfide-bonded: Cys-186–Cys-441, Cys-255–Cys-272, Cys-281–Cys-291, and Cys-503–Cys-525. Catalysis depends on Ser-187, which acts as the Acyl-ester intermediate. An N-linked (GlcNAc...) asparagine glycan is attached at Asn-233. Asp-256, Asp-259, Ala-261, Asp-263, and Ile-265 together coordinate Ca(2+). Asn-311 carries an N-linked (GlcNAc...) asparagine glycan. Residues Asp-400 and His-440 each act as charge relay system in the active site. Asn-516 is a glycosylation site (N-linked (GlcNAc...) asparagine).

The protein belongs to the tannase family.

The protein localises to the secreted. It carries out the reaction feruloyl-polysaccharide + H2O = ferulate + polysaccharide.. Its function is as follows. Involved in degradation of plant cell walls. Hydrolyzes the feruloyl-arabinose ester bond in arabinoxylans as well as the feruloyl-galactose and feruloyl-arabinose ester bonds in pectin. The protein is Probable feruloyl esterase B (faeB) of Aspergillus clavatus (strain ATCC 1007 / CBS 513.65 / DSM 816 / NCTC 3887 / NRRL 1 / QM 1276 / 107).